Consider the following 44-residue polypeptide: M-factor (44 aa).

Residues 1 to 32 (MDSIATNTHSSSIVNAYNNNPTDVVKTQNIKN) constitute a propeptide that is removed on maturation. Position 41 is a cysteine methyl ester (C41). A lipid anchor (S-farnesyl cysteine) is attached at C41. Residues 42–44 (VIA) constitute a propeptide, removed in mature form.

It is found in the secreted. Functionally, M-factor is a mating pheromone produced by M-type mating cells. All three mfm genes contribute to the production of M-factor. This is M-factor (mfm2) from Schizosaccharomyces pombe (strain 972 / ATCC 24843) (Fission yeast).